The chain runs to 654 residues: Fructose-1,6-bisphosphatase class 3 (654 aa).

The disordered stretch occupies residues 288–307; that stretch reads NPAFKPKKRPDKHERLTQRE. The segment covering 298–307 has biased composition (basic and acidic residues); sequence DKHERLTQRE.

Belongs to the FBPase class 3 family. Requires Mn(2+) as cofactor.

It carries out the reaction beta-D-fructose 1,6-bisphosphate + H2O = beta-D-fructose 6-phosphate + phosphate. The protein operates within carbohydrate biosynthesis; gluconeogenesis. This is Fructose-1,6-bisphosphatase class 3 from Staphylococcus aureus (strain MSSA476).